We begin with the raw amino-acid sequence, 29 residues long: RICPRILMECKADSDCLAQCICEESGFCG.

3 cysteine pairs are disulfide-bonded: C3–C20, C10–C22, and C16–C28.

The protein belongs to the protease inhibitor I7 (squash-type serine protease inhibitor) family.

It localises to the secreted. Strongly inhibits trypsin, weakly inhibits chymotrypsin. The sequence is that of Trypsin inhibitor 3 from Cyclanthera pedata (Achocha).